A 779-amino-acid chain; its full sequence is Endonuclease MutS2 (779 aa).

328–335 (GPNTGGKT) contacts ATP. The Smr domain occupies 704–779 (LDLRGKRYEE…GSGATIVTLG (76 aa)).

It belongs to the DNA mismatch repair MutS family. MutS2 subfamily. Homodimer. Binds to stalled ribosomes, contacting rRNA.

Its function is as follows. Endonuclease that is involved in the suppression of homologous recombination and thus may have a key role in the control of bacterial genetic diversity. In terms of biological role, acts as a ribosome collision sensor, splitting the ribosome into its 2 subunits. Detects stalled/collided 70S ribosomes which it binds and splits by an ATP-hydrolysis driven conformational change. Acts upstream of the ribosome quality control system (RQC), a ribosome-associated complex that mediates the extraction of incompletely synthesized nascent chains from stalled ribosomes and their subsequent degradation. Probably generates substrates for RQC. In Streptococcus pyogenes serotype M18 (strain MGAS8232), this protein is Endonuclease MutS2.